Here is a 311-residue protein sequence, read N- to C-terminus: T-cell acute lymphocytic leukemia protein 1 homolog (311 aa).

Residues 1-14 show a composition bias toward pro residues; it reads MTMDRPPAPPPPSS. The interval 1 to 67 is disordered; the sequence is MTMDRPPAPP…RPSPGPPAAA (67 aa). The span at 15 to 25 shows a compositional bias: basic and acidic residues; the sequence is DPRDARRHDPE. Residues 179 to 231 enclose the bHLH domain; sequence VRRIFTNSRERWRQQNVNGAFAELRKLIPTHPPDKKLSKNEILRLAMKYINFL. Residues 265 to 311 are disordered; that stretch reads SPNSSCGSSLDGAASPDSFTEEHDTLDSKHARNLHHAILPVEGSAQR. Residues 284–294 show a composition bias toward basic and acidic residues; that stretch reads TEEHDTLDSKH.

In terms of assembly, efficient DNA binding requires dimerization with another bHLH protein. Forms heterodimers with TCF3. Phosphorylated on serine residues.

The protein resides in the nucleus. Functionally, implicated in the genesis of hemopoietic malignancies. It may play an important role in hemopoietic differentiation. The sequence is that of T-cell acute lymphocytic leukemia protein 1 homolog (TAL1) from Gallus gallus (Chicken).